Consider the following 200-residue polypeptide: Cell division protein SepF (200 aa).

Disordered stretches follow at residues 35–60 and 170–200; these read NLYQQENPQPPAPQESATAQNRRWRE and LHEVPQPPARPSRPTGSPNQTWGNETNRMAQ. A compositionally biased stretch (polar residues) spans 183 to 200; that stretch reads PTGSPNQTWGNETNRMAQ.

This sequence belongs to the SepF family. Homodimer. Interacts with FtsZ.

It is found in the cytoplasm. In terms of biological role, cell division protein that is part of the divisome complex and is recruited early to the Z-ring. Probably stimulates Z-ring formation, perhaps through the cross-linking of FtsZ protofilaments. Its function overlaps with FtsA. This chain is Cell division protein SepF, found in Nostoc punctiforme (strain ATCC 29133 / PCC 73102).